A 180-amino-acid chain; its full sequence is Ribulose bisphosphate carboxylase small subunit, chloroplastic 3 (180 aa).

The transit peptide at 1 to 56 directs the protein to the chloroplast; it reads MASSLMSNAITAVVGASGAQANMVAPFNGLKSIASFPVTRKSNDITSIASNGGRVQ.

It belongs to the RuBisCO small chain family. Heterohexadecamer of 8 large and 8 small subunits.

Its subcellular location is the plastid. It localises to the chloroplast. In terms of biological role, ruBisCO catalyzes two reactions: the carboxylation of D-ribulose 1,5-bisphosphate, the primary event in carbon dioxide fixation, as well as the oxidative fragmentation of the pentose substrate. Both reactions occur simultaneously and in competition at the same active site. Although the small subunit is not catalytic it is essential for maximal activity. This is Ribulose bisphosphate carboxylase small subunit, chloroplastic 3 from Amaranthus hypochondriacus (Prince-of-Wales feather).